A 283-amino-acid polypeptide reads, in one-letter code: Thymidylate synthase (283 aa).

R22 contributes to the dUMP binding site. C160 functions as the Nucleophile in the catalytic mechanism. DUMP contacts are provided by residues R180–D183, N191, and H221–Y223. D183 lines the (6R)-5,10-methylene-5,6,7,8-tetrahydrofolate pocket. S282 serves as a coordination point for (6R)-5,10-methylene-5,6,7,8-tetrahydrofolate.

It belongs to the thymidylate synthase family. Bacterial-type ThyA subfamily. As to quaternary structure, homodimer.

The protein resides in the cytoplasm. The catalysed reaction is dUMP + (6R)-5,10-methylene-5,6,7,8-tetrahydrofolate = 7,8-dihydrofolate + dTMP. It participates in pyrimidine metabolism; dTTP biosynthesis. Catalyzes the reductive methylation of 2'-deoxyuridine-5'-monophosphate (dUMP) to 2'-deoxythymidine-5'-monophosphate (dTMP) while utilizing 5,10-methylenetetrahydrofolate (mTHF) as the methyl donor and reductant in the reaction, yielding dihydrofolate (DHF) as a by-product. This enzymatic reaction provides an intracellular de novo source of dTMP, an essential precursor for DNA biosynthesis. This is Thymidylate synthase from Shewanella piezotolerans (strain WP3 / JCM 13877).